We begin with the raw amino-acid sequence, 865 residues long: Protein translocase subunit SecA (865 aa).

ATP-binding positions include Gln-93, 111–115 (GEGKT), and Asp-501. Zn(2+) is bound by residues Cys-841, Cys-843, Cys-852, and Cys-853.

The protein belongs to the SecA family. As to quaternary structure, monomer and homodimer. Part of the essential Sec protein translocation apparatus which comprises SecA, SecYEG and auxiliary proteins SecDF-YajC and YidC. Requires Zn(2+) as cofactor.

Its subcellular location is the cell inner membrane. It localises to the cytoplasm. The catalysed reaction is ATP + H2O + cellular proteinSide 1 = ADP + phosphate + cellular proteinSide 2.. Its function is as follows. Part of the Sec protein translocase complex. Interacts with the SecYEG preprotein conducting channel. Has a central role in coupling the hydrolysis of ATP to the transfer of proteins into and across the cell membrane, serving as an ATP-driven molecular motor driving the stepwise translocation of polypeptide chains across the membrane. The sequence is that of Protein translocase subunit SecA from Helicobacter pylori (strain Shi470).